The following is a 529-amino-acid chain: Peptide chain release factor 3 (529 aa).

Residues 11-280 enclose the tr-type G domain; that stretch reads AKRRTFAIIS…GLVEWAPAPM (270 aa). GTP is bound by residues 20–27, 88–92, and 142–145; these read SHPDAGKT, DTPGH, and NKLD.

Belongs to the TRAFAC class translation factor GTPase superfamily. Classic translation factor GTPase family. PrfC subfamily.

Its subcellular location is the cytoplasm. Increases the formation of ribosomal termination complexes and stimulates activities of RF-1 and RF-2. It binds guanine nucleotides and has strong preference for UGA stop codons. It may interact directly with the ribosome. The stimulation of RF-1 and RF-2 is significantly reduced by GTP and GDP, but not by GMP. The sequence is that of Peptide chain release factor 3 from Yersinia pestis bv. Antiqua (strain Antiqua).